Consider the following 95-residue polypeptide: Aspartyl/glutamyl-tRNA(Asn/Gln) amidotransferase subunit C (95 aa).

It belongs to the GatC family. Heterotrimer of A, B and C subunits.

It carries out the reaction L-glutamyl-tRNA(Gln) + L-glutamine + ATP + H2O = L-glutaminyl-tRNA(Gln) + L-glutamate + ADP + phosphate + H(+). The catalysed reaction is L-aspartyl-tRNA(Asn) + L-glutamine + ATP + H2O = L-asparaginyl-tRNA(Asn) + L-glutamate + ADP + phosphate + 2 H(+). In terms of biological role, allows the formation of correctly charged Asn-tRNA(Asn) or Gln-tRNA(Gln) through the transamidation of misacylated Asp-tRNA(Asn) or Glu-tRNA(Gln) in organisms which lack either or both of asparaginyl-tRNA or glutaminyl-tRNA synthetases. The reaction takes place in the presence of glutamine and ATP through an activated phospho-Asp-tRNA(Asn) or phospho-Glu-tRNA(Gln). The sequence is that of Aspartyl/glutamyl-tRNA(Asn/Gln) amidotransferase subunit C from Chlorobium phaeovibrioides (strain DSM 265 / 1930) (Prosthecochloris vibrioformis (strain DSM 265)).